The chain runs to 86 residues: Large ribosomal subunit protein bL31B (86 aa).

The protein belongs to the bacterial ribosomal protein bL31 family. Type B subfamily. As to quaternary structure, part of the 50S ribosomal subunit.

The chain is Large ribosomal subunit protein bL31B from Vibrio campbellii (strain ATCC BAA-1116).